A 207-amino-acid chain; its full sequence is Urease accessory protein UreE (207 aa).

A disordered region spans residues 171–207; it reads HHGHAHSHSHSHDHDHDHDHDHQHGPGCAHGHGHDHH. The segment covering 180–194 has biased composition (basic and acidic residues); it reads HSHDHDHDHDHDHQH.

It belongs to the UreE family.

It is found in the cytoplasm. Functionally, involved in urease metallocenter assembly. Binds nickel. Probably functions as a nickel donor during metallocenter assembly. The chain is Urease accessory protein UreE from Burkholderia lata (strain ATCC 17760 / DSM 23089 / LMG 22485 / NCIMB 9086 / R18194 / 383).